We begin with the raw amino-acid sequence, 152 residues long: D-aminoacyl-tRNA deacylase (152 aa).

The short motif at 142 to 143 (GP) is the Gly-cisPro motif, important for rejection of L-amino acids element.

The protein belongs to the DTD family. As to quaternary structure, homodimer.

The protein resides in the cytoplasm. The catalysed reaction is glycyl-tRNA(Ala) + H2O = tRNA(Ala) + glycine + H(+). It catalyses the reaction a D-aminoacyl-tRNA + H2O = a tRNA + a D-alpha-amino acid + H(+). In terms of biological role, an aminoacyl-tRNA editing enzyme that deacylates mischarged D-aminoacyl-tRNAs. Also deacylates mischarged glycyl-tRNA(Ala), protecting cells against glycine mischarging by AlaRS. Acts via tRNA-based rather than protein-based catalysis; rejects L-amino acids rather than detecting D-amino acids in the active site. By recycling D-aminoacyl-tRNA to D-amino acids and free tRNA molecules, this enzyme counteracts the toxicity associated with the formation of D-aminoacyl-tRNA entities in vivo and helps enforce protein L-homochirality. The polypeptide is D-aminoacyl-tRNA deacylase (Paraburkholderia phymatum (strain DSM 17167 / CIP 108236 / LMG 21445 / STM815) (Burkholderia phymatum)).